A 186-amino-acid chain; its full sequence is Peptidyl-tRNA hydrolase (186 aa).

Tyr14 contacts tRNA. His19 acts as the Proton acceptor in catalysis. 3 residues coordinate tRNA: Tyr64, Asn66, and Asn112.

Belongs to the PTH family. As to quaternary structure, monomer.

Its subcellular location is the cytoplasm. The catalysed reaction is an N-acyl-L-alpha-aminoacyl-tRNA + H2O = an N-acyl-L-amino acid + a tRNA + H(+). Functionally, hydrolyzes ribosome-free peptidyl-tRNAs (with 1 or more amino acids incorporated), which drop off the ribosome during protein synthesis, or as a result of ribosome stalling. Its function is as follows. Catalyzes the release of premature peptidyl moieties from peptidyl-tRNA molecules trapped in stalled 50S ribosomal subunits, and thus maintains levels of free tRNAs and 50S ribosomes. In Bacillus cytotoxicus (strain DSM 22905 / CIP 110041 / 391-98 / NVH 391-98), this protein is Peptidyl-tRNA hydrolase.